A 1383-amino-acid chain; its full sequence is DNA-directed RNA polymerase subunit beta'' (1383 aa).

4 residues coordinate Zn(2+): cysteine 220, cysteine 289, cysteine 296, and cysteine 299.

This sequence belongs to the RNA polymerase beta' chain family. RpoC2 subfamily. In plastids the minimal PEP RNA polymerase catalytic core is composed of four subunits: alpha, beta, beta', and beta''. When a (nuclear-encoded) sigma factor is associated with the core the holoenzyme is formed, which can initiate transcription. Zn(2+) is required as a cofactor.

It is found in the plastid. It localises to the chloroplast. The enzyme catalyses RNA(n) + a ribonucleoside 5'-triphosphate = RNA(n+1) + diphosphate. In terms of biological role, DNA-dependent RNA polymerase catalyzes the transcription of DNA into RNA using the four ribonucleoside triphosphates as substrates. The chain is DNA-directed RNA polymerase subunit beta'' from Oenothera parviflora (Small-flowered evening primrose).